Reading from the N-terminus, the 108-residue chain is Peptidyl-prolyl cis-trans isomerase FKBP1A (108 aa).

A PPIase FKBP-type domain is found at 20–108 (GQTVVVHYVG…TFDVELLRLE (89 aa)).

The protein belongs to the FKBP-type PPIase family. FKBP1 subfamily.

The protein resides in the cytoplasm. The enzyme catalyses [protein]-peptidylproline (omega=180) = [protein]-peptidylproline (omega=0). Inhibited by both FK506 and rapamycin. Keeps in an inactive conformation TGFBR1, the TGF-beta type I serine/threonine kinase receptor, preventing TGF-beta receptor activation in absence of ligand. May modulate the RYR1 calcium channel activity. PPIases accelerate the folding of proteins. It catalyzes the cis-trans isomerization of proline imidic peptide bonds in oligopeptides. The chain is Peptidyl-prolyl cis-trans isomerase FKBP1A (fkbp1a) from Xenopus laevis (African clawed frog).